Consider the following 504-residue polypeptide: Aspartyl/glutamyl-tRNA(Asn/Gln) amidotransferase subunit B (504 aa).

The protein belongs to the GatB/GatE family. GatB subfamily. As to quaternary structure, heterotrimer of A, B and C subunits.

The enzyme catalyses L-glutamyl-tRNA(Gln) + L-glutamine + ATP + H2O = L-glutaminyl-tRNA(Gln) + L-glutamate + ADP + phosphate + H(+). It catalyses the reaction L-aspartyl-tRNA(Asn) + L-glutamine + ATP + H2O = L-asparaginyl-tRNA(Asn) + L-glutamate + ADP + phosphate + 2 H(+). Its function is as follows. Allows the formation of correctly charged Asn-tRNA(Asn) or Gln-tRNA(Gln) through the transamidation of misacylated Asp-tRNA(Asn) or Glu-tRNA(Gln) in organisms which lack either or both of asparaginyl-tRNA or glutaminyl-tRNA synthetases. The reaction takes place in the presence of glutamine and ATP through an activated phospho-Asp-tRNA(Asn) or phospho-Glu-tRNA(Gln). This is Aspartyl/glutamyl-tRNA(Asn/Gln) amidotransferase subunit B from Tropheryma whipplei (strain TW08/27) (Whipple's bacillus).